The sequence spans 164 residues: Phosphopantetheine adenylyltransferase (164 aa).

Substrate is bound at residue Ser-9. ATP is bound by residues 9–10 (SF) and His-17. The substrate site is built by Lys-41, Thr-74, and Arg-88. Residues 89–91 (GVR), Glu-99, and 124–130 (NSFVASS) contribute to the ATP site.

Belongs to the bacterial CoaD family. As to quaternary structure, homohexamer. It depends on Mg(2+) as a cofactor.

The protein localises to the cytoplasm. The enzyme catalyses (R)-4'-phosphopantetheine + ATP + H(+) = 3'-dephospho-CoA + diphosphate. It functions in the pathway cofactor biosynthesis; coenzyme A biosynthesis; CoA from (R)-pantothenate: step 4/5. Functionally, reversibly transfers an adenylyl group from ATP to 4'-phosphopantetheine, yielding dephospho-CoA (dPCoA) and pyrophosphate. The polypeptide is Phosphopantetheine adenylyltransferase (Lactobacillus helveticus (strain DPC 4571)).